Consider the following 186-residue polypeptide: Lactoylglutathione lyase (186 aa).

One can recognise a VOC domain in the interval 28–175; the sequence is FMQQTMFRIK…DGYWIELFDR (148 aa). 2 residues coordinate substrate: Q31 and R35. Q31 lines the Zn(2+) pocket. E97 serves as a coordination point for Zn(2+). Substrate-binding positions include N101, R121, H125, and 155 to 156; that span reads KM. H125 provides a ligand contact to Zn(2+). Residue E171 coordinates Zn(2+). E171 functions as the Proton donor/acceptor in the catalytic mechanism.

The protein belongs to the glyoxalase I family. It depends on Zn(2+) as a cofactor.

It carries out the reaction (R)-S-lactoylglutathione = methylglyoxal + glutathione. It participates in secondary metabolite metabolism; methylglyoxal degradation; (R)-lactate from methylglyoxal: step 1/2. In terms of biological role, catalyzes the conversion of hemimercaptal, formed from methylglyoxal and glutathione, to S-lactoylglutathione. The protein is Lactoylglutathione lyase of Cicer arietinum (Chickpea).